Here is a 557-residue protein sequence, read N- to C-terminus: GYGLTRIPHLNKDLAFTLEERQQLNIHGLLPPCFISQDIQVLRVIKNFERLNSDFDRYLLLMDLQDRNEKLFYKVLMSDIEKFMPIVYTPTVGLACQQYSLAFRKPRGLFISIHDRGHVASVLNAWPEDVIKAVVVTDGERILGLGDLGCNGMGIPVGKLALYTACGGVNPQECLPVILDVGTENEELLKDPLYIGLRQRRVRGPEYDDFLDEFMEAVSSKYGMNCLIQFEDFANINAFRLLKKYQNQYCTFNDDIQGTASVAVAGILAALRITKNKLSDQTILFQGAGEAALGIAHLIVMAMEKEGVPKEKAIKKIWLVDSKGLIVKGRAALTNEKEEFAHEHEEMKNLEAIVQDIKPTALIGVAAIGGAFSEQILKDMAAFNERPIIFALSNPTSKAECTAERGYTLTQGRAIFASGSPFDPVTLPSGQTLYPGQGNNSYVFPGVALAVVACGLRHITDKIFLTTAEVIAQQVSDKHLEEGRLYPPLNTIRDVSLKIAEKIVRDAYQEKTATIYPEPSNKEAFVRSQMYSTDYDQILPDGYSWPEEAQKIQTKLD.

Tyr88 serves as the catalytic Proton donor. Arg141 is an NADP(+) binding site. Catalysis depends on Lys159, which acts as the Proton acceptor. Residues Glu231, Asp232, and Asp255 each contribute to the a divalent metal cation site. Residue Asp255 participates in NADP(+) binding. Ser322 bears the Phosphoserine mark. Residue Asn394 participates in NADP(+) binding.

It belongs to the malic enzymes family. Homotetramer. The cofactor is Mg(2+). Mn(2+) is required as a cofactor.

The protein localises to the cytoplasm. The enzyme catalyses (S)-malate + NADP(+) = pyruvate + CO2 + NADPH. The catalysed reaction is oxaloacetate + H(+) = pyruvate + CO2. Functionally, catalyzes the oxidative decarboxylation of (S)-malate in the presence of NADP(+) and divalent metal ions, and decarboxylation of oxaloacetate. In Sus scrofa (Pig), this protein is NADP-dependent malic enzyme (ME1).